A 196-amino-acid polypeptide reads, in one-letter code: Shikimate kinase (196 aa).

21–26 (GTGKSR) lines the ATP pocket. Residue Ser-25 coordinates Mg(2+). Substrate-binding residues include Asp-43, Arg-67, and Gly-89. Arg-126 serves as a coordination point for ATP. Arg-145 serves as a coordination point for substrate. ATP is bound at residue Arg-161.

It belongs to the shikimate kinase family. In terms of assembly, monomer. Mg(2+) is required as a cofactor.

It localises to the cytoplasm. It carries out the reaction shikimate + ATP = 3-phosphoshikimate + ADP + H(+). It functions in the pathway metabolic intermediate biosynthesis; chorismate biosynthesis; chorismate from D-erythrose 4-phosphate and phosphoenolpyruvate: step 5/7. In terms of biological role, catalyzes the specific phosphorylation of the 3-hydroxyl group of shikimic acid using ATP as a cosubstrate. This chain is Shikimate kinase, found in Deinococcus radiodurans (strain ATCC 13939 / DSM 20539 / JCM 16871 / CCUG 27074 / LMG 4051 / NBRC 15346 / NCIMB 9279 / VKM B-1422 / R1).